We begin with the raw amino-acid sequence, 97 residues long: MEVTDVRLRRVNTDGRMRAIASITLDHEFVVHDIRVIDGNNGLFVAMPSKRTPDGEFRDIAHPINSSTRGKIQDAVLNEYHRLGDSEALEYEEAGAS.

The protein belongs to the SpoVG family.

Essential for sporulation. Interferes with or is a negative regulator of the pathway leading to asymmetric septation. In Bacillus velezensis (strain DSM 23117 / BGSC 10A6 / LMG 26770 / FZB42) (Bacillus amyloliquefaciens subsp. plantarum), this protein is Putative septation protein SpoVG.